We begin with the raw amino-acid sequence, 297 residues long: tRNA pseudouridine synthase B (297 aa).

The active-site Nucleophile is Asp44.

Belongs to the pseudouridine synthase TruB family. Type 1 subfamily.

It carries out the reaction uridine(55) in tRNA = pseudouridine(55) in tRNA. Responsible for synthesis of pseudouridine from uracil-55 in the psi GC loop of transfer RNAs. The protein is tRNA pseudouridine synthase B of Mycobacterium sp. (strain JLS).